Consider the following 106-residue polypeptide: ATP-dependent Clp protease adapter protein ClpS (106 aa).

The protein belongs to the ClpS family. Binds to the N-terminal domain of the chaperone ClpA.

Its function is as follows. Involved in the modulation of the specificity of the ClpAP-mediated ATP-dependent protein degradation. The sequence is that of ATP-dependent Clp protease adapter protein ClpS from Aliivibrio salmonicida (strain LFI1238) (Vibrio salmonicida (strain LFI1238)).